A 317-amino-acid chain; its full sequence is tRNA dimethylallyltransferase (317 aa).

14-21 serves as a coordination point for ATP; the sequence is GPTAVGKT. Substrate is bound at residue 16–21; sequence TAVGKT. The segment at 39–42 is interaction with substrate tRNA; it reads DSMQ.

Belongs to the IPP transferase family. In terms of assembly, monomer. Mg(2+) serves as cofactor.

It carries out the reaction adenosine(37) in tRNA + dimethylallyl diphosphate = N(6)-dimethylallyladenosine(37) in tRNA + diphosphate. Its function is as follows. Catalyzes the transfer of a dimethylallyl group onto the adenine at position 37 in tRNAs that read codons beginning with uridine, leading to the formation of N6-(dimethylallyl)adenosine (i(6)A). The chain is tRNA dimethylallyltransferase from Bacillus mycoides (strain KBAB4) (Bacillus weihenstephanensis).